Consider the following 417-residue polypeptide: Tyrosine aminotransferase (417 aa).

N6-(pyridoxal phosphate)lysine is present on K249.

It belongs to the class-I pyridoxal-phosphate-dependent aminotransferase family. As to quaternary structure, homodimer. Pyridoxal 5'-phosphate is required as a cofactor.

It carries out the reaction L-tyrosine + 2-oxoglutarate = 3-(4-hydroxyphenyl)pyruvate + L-glutamate. The protein operates within amino-acid degradation; L-phenylalanine degradation; acetoacetate and fumarate from L-phenylalanine: step 2/6. Its function is as follows. Transaminase involved in tyrosine breakdown. Converts tyrosine to p-hydroxyphenylpyruvate. Has much lower affinity and transaminase activity towards phenylalanine. This is Tyrosine aminotransferase (tat) from Dictyostelium discoideum (Social amoeba).